The following is a 486-amino-acid chain: Zinc transporter 6 (486 aa).

The Cytoplasmic segment spans residues Met1 to Lys60. A helical membrane pass occupies residues Ile61–Ser81. At Thr82–Thr91 the chain is on the extracellular side. The chain crosses the membrane as a helical span at residues Tyr92–Met112. Residues Lys113–Arg125 are Cytoplasmic-facing. A helical transmembrane segment spans residues Phe126–Leu146. The Extracellular portion of the chain corresponds to Lys147 to Thr161. The helical transmembrane segment at Gly162–Val182 threads the bilayer. Residues Lys183–Pro227 are Cytoplasmic-facing. A helical transmembrane segment spans residues Phe228–Ile248. Topologically, residues Asn249–Asp255 are extracellular. A helical membrane pass occupies residues Thr256–Tyr276. Topologically, residues Ser277 to Pro486 are cytoplasmic. Over residues Pro394–Lys411 the composition is skewed to low complexity. The segment at Pro394–Gly425 is disordered.

It belongs to the cation diffusion facilitator (CDF) transporter (TC 2.A.4) family. SLC30A subfamily. In terms of assembly, heterodimer with SLC30A5; form a functional zinc ion transmembrane transporter.

It is found in the golgi apparatus. The protein localises to the trans-Golgi network membrane. Has probably no intrinsic transporter activity but together with SLC30A5 forms a functional zinc ion:proton antiporter heterodimer, mediating zinc entry into the lumen of organelles along the secretory pathway. As part of that zinc ion:proton antiporter, contributes to zinc ion homeostasis within the early secretory pathway and regulates the activation and folding of enzymes like alkaline phosphatases and enzymes involved in phosphatidylinositol glycan anchor biosynthesis. In Danio rerio (Zebrafish), this protein is Zinc transporter 6 (slc30a6).